The following is a 541-amino-acid chain: Neutral amino acid transporter B(0) (541 aa).

M1 is subject to N-acetylmethionine. Topologically, residues 1-51 (MVADPPRDSKGLAAAEPTANGGLALASIEDQGAAAGGYCGSRDQVRRCLRA) are cytoplasmic. A helical membrane pass occupies residues 52-81 (NLLVLLTVVAVVAGVALGLGVSGAGGALAL). Residues 82 to 94 (GPERLSAFVFPGE) are Extracellular-facing. The chain crosses the membrane as a helical span at residues 95–116 (LLLRLLRMIILPLVVCSLIGGA). The Cytoplasmic portion of the chain corresponds to 117-130 (ASLDPGALGRLGAW). Residues 131–153 (ALLFFLVTTLLASALGVGLALAL) form a helical membrane-spanning segment. The Extracellular portion of the chain corresponds to 154-224 (QPGAASAAIN…GTRVKVPVGQ (71 aa)). 2 N-linked (GlcNAc...) asparagine glycosylation sites follow: N163 and N212. A helical membrane pass occupies residues 225–248 (EVEGMNILGLVVFAIVFGVALRKL). Residues 249–257 (GPEGELLIR) are Cytoplasmic-facing. Residues 258–285 (FFNSFNEATMVLVSWIMWYAPVGIMFLV) traverse the membrane as a helical segment. Residues 286-306 (AGKIVEMEDVGLLFARLGKYI) lie on the Extracellular side of the membrane. A helical membrane pass occupies residues 307–328 (LCCLLGHAIHGLLVLPLIYFLF). Topologically, residues 329 to 333 (TRKNP) are cytoplasmic. Positions 334–364 (YRFLWGIVTPLATAFGTSSSSATLPLMMKCV) form an intramembrane region, discontinuously helical. Residues 365–373 (EENNGVAKH) lie on the Cytoplasmic side of the membrane. A helical membrane pass occupies residues 374–400 (ISRFILPIGATVNMDGAALFQCVAAVF). 3 residues coordinate Na(+): G382, T384, and N386. The Extracellular portion of the chain corresponds to 401 to 413 (IAQLSQQSLDFVK). Residues 414 to 447 (IITILVTATASSVGAAGIPAGGVLTLAIILEAVN) constitute an intramembrane region (discontinuously helical). Residues 448 to 460 (LPVDHISLILAVD) are Extracellular-facing. Residues 461-482 (WLVDRSCTVLNVEGDALGAGLL) traverse the membrane as a helical segment. N471 and D475 together coordinate Na(+). At 483-541 (QNYVDRTESRSTEPELIQVKSELPLDPLPVPTEEGNPLLKHYRGPAGDATVASEKESVM) the chain is on the cytoplasmic side. S493 bears the Phosphoserine mark. T494 is modified (phosphothreonine). Phosphoserine is present on residues S503, S535, and S539. Positions 511-541 (PVPTEEGNPLLKHYRGPAGDATVASEKESVM) are disordered.

This sequence belongs to the dicarboxylate/amino acid:cation symporter (DAACS) (TC 2.A.23) family. SLC1A5 subfamily. As to quaternary structure, homotrimer. Interacts with ERVH48-1/suppressyn; may negatively regulate syncytialization. As to expression, placenta, lung, skeletal muscle, kidney, pancreas, and intestine. Expressed in CD34-positive hematopoietic progenitors (at protein level).

The protein localises to the cell membrane. It localises to the melanosome. It catalyses the reaction L-glutamine(out) + L-serine(in) + Na(+)(out) = L-glutamine(in) + L-serine(out) + Na(+)(in). It carries out the reaction L-glutamine(in) + L-serine(out) + Na(+)(out) = L-glutamine(out) + L-serine(in) + Na(+)(in). The enzyme catalyses L-threonine(in) + L-glutamine(out) + Na(+)(out) = L-threonine(out) + L-glutamine(in) + Na(+)(in). The catalysed reaction is L-threonine(out) + L-glutamine(in) + Na(+)(out) = L-threonine(in) + L-glutamine(out) + Na(+)(in). It catalyses the reaction L-asparagine(in) + L-glutamine(out) + Na(+)(out) = L-asparagine(out) + L-glutamine(in) + Na(+)(in). It carries out the reaction L-asparagine(out) + L-glutamine(in) + Na(+)(out) = L-asparagine(in) + L-glutamine(out) + Na(+)(in). The enzyme catalyses L-glutamine(in) + L-alanine(out) + Na(+)(out) = L-glutamine(out) + L-alanine(in) + Na(+)(in). The catalysed reaction is L-valine(out) + L-glutamine(in) + Na(+)(out) = L-valine(in) + L-glutamine(out) + Na(+)(in). It catalyses the reaction L-glutamine(in) + L-methionine(out) + Na(+)(out) = L-glutamine(out) + L-methionine(in) + Na(+)(in). It carries out the reaction L-glutamine(in) + L-glutamate(out) + Na(+)(out) + H(+)(out) = L-glutamine(out) + L-glutamate(in) + Na(+)(in) + H(+)(in). The enzyme catalyses D-serine(in) + L-glutamine(out) + Na(+)(out) = D-serine(out) + L-glutamine(in) + Na(+)(in). The catalysed reaction is D-serine(in) + L-alanine(out) + Na(+)(out) = D-serine(out) + L-alanine(in) + Na(+)(in). It catalyses the reaction nitrate(in) = nitrate(out). It carries out the reaction iodide(out) = iodide(in). The enzyme catalyses thiocyanate(in) = thiocyanate(out). Its activity is regulated as follows. Regulated by L-cysteine, which can either inhibit substrate influx or trigger substrate efflux without being transported itself. In terms of biological role, sodium-coupled antiporter of neutral amino acids. In a tri-substrate transport cycle, exchanges neutral amino acids between the extracellular and intracellular compartments, coupled to the inward cotransport of at least one sodium ion. The preferred substrate is the essential amino acid L-glutamine, a precursor for biosynthesis of proteins, nucleotides and amine sugars as well as an alternative fuel for mitochondrial oxidative phosphorylation. Exchanges L-glutamine with other neutral amino acids such as L-serine, L-threonine and L-asparagine in a bidirectional way. Provides L-glutamine to proliferating stem and activated cells driving the metabolic switch toward cell differentiation. The transport cycle is usually pH-independent, with the exception of L-glutamate. Transports extracellular L-glutamate coupled to the cotransport of one proton and one sodium ion in exchange for intracellular L-glutamine counter-ion. May provide for L-glutamate uptake in glial cells regulating glutamine/glutamate cycle in the nervous system. Can transport D-amino acids. Mediates D-serine release from the retinal glia potentially affecting NMDA receptor function in retinal neurons. Displays sodium- and amino acid-dependent but uncoupled channel-like anion conductance with a preference SCN(-) &gt;&gt; NO3(-) &gt; I(-) &gt; Cl(-). Through binding of the fusogenic protein syncytin-1/ERVW-1 may mediate trophoblasts syncytialization, the spontaneous fusion of their plasma membranes, an essential process in placental development. Functionally, (Microbial infection) Acts as a cell surface receptor for Feline endogenous virus RD114. (Microbial infection) Acts as a cell surface receptor for Baboon M7 endogenous virus. Its function is as follows. (Microbial infection) Acts as a cell surface receptor for type D simian retroviruses. This chain is Neutral amino acid transporter B(0), found in Homo sapiens (Human).